We begin with the raw amino-acid sequence, 160 residues long: Cyclic pyranopterin monophosphate synthase (160 aa).

Substrate contacts are provided by residues 75-77 (LCH) and 113-114 (ME). Asp128 is an active-site residue.

Belongs to the MoaC family. In terms of assembly, homohexamer; trimer of dimers.

It catalyses the reaction (8S)-3',8-cyclo-7,8-dihydroguanosine 5'-triphosphate = cyclic pyranopterin phosphate + diphosphate. Its pathway is cofactor biosynthesis; molybdopterin biosynthesis. In terms of biological role, catalyzes the conversion of (8S)-3',8-cyclo-7,8-dihydroguanosine 5'-triphosphate to cyclic pyranopterin monophosphate (cPMP). This Methylobacterium nodulans (strain LMG 21967 / CNCM I-2342 / ORS 2060) protein is Cyclic pyranopterin monophosphate synthase.